The sequence spans 273 residues: Putative phosphoenolpyruvate synthase regulatory protein (273 aa).

Glycine 153–threonine 160 contributes to the ADP binding site.

The protein belongs to the pyruvate, phosphate/water dikinase regulatory protein family. PSRP subfamily.

The enzyme catalyses [pyruvate, water dikinase] + ADP = [pyruvate, water dikinase]-phosphate + AMP + H(+). It carries out the reaction [pyruvate, water dikinase]-phosphate + phosphate + H(+) = [pyruvate, water dikinase] + diphosphate. Bifunctional serine/threonine kinase and phosphorylase involved in the regulation of the phosphoenolpyruvate synthase (PEPS) by catalyzing its phosphorylation/dephosphorylation. The polypeptide is Putative phosphoenolpyruvate synthase regulatory protein (Verminephrobacter eiseniae (strain EF01-2)).